Reading from the N-terminus, the 299-residue chain is Peroxisomal biogenesis factor 19 (299 aa).

Positions 1–63 (MAAAEGDGGV…SPGDTAKDAL (63 aa)) are disordered. A2 bears the N-acetylalanine mark. Residues 2–56 (AAAEGDGGVRAEADRELEELLESALDDFDKAKPSPAPPPTTTAPDASGPQKRSPG) are docking to the peroxisome membrane and binding to PEX3. Residues 2-91 (AAAEGDGGVR…QATAEFEKAM (90 aa)) are necessary for PEX19 function on peroxisome biogenesis. Positions 16–27 (RELEELLESALD) are enriched in acidic residues. Phosphoserine is present on residues S35, S54, and S66. The residue at position 236 (T236) is a Phosphothreonine. C296 is modified (cysteine methyl ester). The S-farnesyl cysteine moiety is linked to residue C296. The propeptide at 297–299 (LIM) is removed in mature form.

Belongs to the peroxin-19 family. As to quaternary structure, interacts with a broad range of peroxisomal membrane proteins, including PEX3, PEX10, PEX11A, PEX11B, PEX12, PEX13, PEX14 and PEX16, PXMP2/PMP22, PXMP4/PMP24, SLC25A17/PMP34, ABCD1/ALDP, ABCD2/ALDRP, and ABCD3/PMP70. Also interacts with the tumor suppressor CDKN2A/p19ARF.

The protein localises to the cytoplasm. The protein resides in the peroxisome membrane. Necessary for early peroxisomal biogenesis. Acts both as a cytosolic chaperone and as an import receptor for peroxisomal membrane proteins (PMPs). Binds and stabilizes newly synthesized PMPs in the cytoplasm by interacting with their hydrophobic membrane-spanning domains, and targets them to the peroxisome membrane by binding to the integral membrane protein PEX3. Excludes CDKN2A from the nucleus and prevents its interaction with MDM2, which results in active degradation of TP53. This Bos taurus (Bovine) protein is Peroxisomal biogenesis factor 19 (PEX19).